We begin with the raw amino-acid sequence, 178 residues long: Alkyl hydroperoxide reductase AhpD (178 aa).

Cysteine 131 (proton donor) is an active-site residue. A disulfide bridge links cysteine 131 with cysteine 134. The active-site Cysteine sulfenic acid (-SOH) intermediate is the cysteine 134.

Belongs to the AhpD family.

The enzyme catalyses N(6)-[(R)-dihydrolipoyl]-L-lysyl-[lipoyl-carrier protein] + a hydroperoxide = N(6)-[(R)-lipoyl]-L-lysyl-[lipoyl-carrier protein] + an alcohol + H2O. Functionally, antioxidant protein with alkyl hydroperoxidase activity. Required for the reduction of the AhpC active site cysteine residues and for the regeneration of the AhpC enzyme activity. This is Alkyl hydroperoxide reductase AhpD from Methylocella silvestris (strain DSM 15510 / CIP 108128 / LMG 27833 / NCIMB 13906 / BL2).